The sequence spans 495 residues: Glycogen synthase (495 aa).

An ADP-alpha-D-glucose-binding site is contributed by Lys-15.

It belongs to the glycosyltransferase 1 family. Bacterial/plant glycogen synthase subfamily.

It carries out the reaction [(1-&gt;4)-alpha-D-glucosyl](n) + ADP-alpha-D-glucose = [(1-&gt;4)-alpha-D-glucosyl](n+1) + ADP + H(+). Its pathway is glycan biosynthesis; glycogen biosynthesis. Synthesizes alpha-1,4-glucan chains using ADP-glucose. This is Glycogen synthase from Variovorax paradoxus (strain S110).